The chain runs to 1009 residues: Protein-tyrosine kinase 2-beta (1009 aa).

The FERM domain occupies 39-359 (RILKVCFYSN…GYCRLQGEHQ (321 aa)). A phosphoserine mark is found at Ser361, Ser375, and Ser399. At Tyr402 the chain carries Phosphotyrosine; by autocatalysis. The region spanning 425–683 (VVLNRILGEG…ELVCSLSDVY (259 aa)) is the Protein kinase domain. ATP is bound by residues 431–439 (LGEGFFGEV), Lys457, and 503–509 (ELYPYGE). Asp549 functions as the Proton acceptor in the catalytic mechanism. The residue at position 579 (Tyr579) is a Phosphotyrosine. Phosphotyrosine; by SRC, FYN and LCK is present on Tyr580. The interval 701–725 (TPKILEPTAFQEPPPKPSRPKYRPP) is disordered. Pro residues predominate over residues 712–725 (EPPPKPSRPKYRPP). Position 722 is a phosphotyrosine (Tyr722). The residue at position 762 (Ser762) is a Phosphoserine. A Phosphothreonine modification is found at Thr765. The segment at 801-1009 (KVKMRQILDK…LANLAHPPAE (209 aa)) is interaction with TGFB1I1. Phosphotyrosine is present on residues Tyr819 and Tyr834. Residue Ser839 is modified to Phosphoserine. Thr842 is subject to Phosphothreonine. Position 849 is a phosphotyrosine (Tyr849). Ser866 carries the post-translational modification Phosphoserine. Residues 868–1009 (QPTANLDRTD…LANLAHPPAE (142 aa)) form a focal adhesion targeting (FAT) region. Tyr881 bears the Phosphotyrosine; by SRC mark.

This sequence belongs to the protein kinase superfamily. Tyr protein kinase family. FAK subfamily. As to quaternary structure, homodimer, or homooligomer. Interacts with SIRPA and SH2D3C. Interacts with ARHGAP10. Interacts with DLG4. Interacts with KCNA2. Interacts with NPHP1, ASAP1, ASAP2, ARHGAP26, SKAP2 and TGFB1I1. The Tyr-402 phosphorylated form interacts with SRC (via SH2 domain) and SRC family members. Forms a signaling complex with EPHA1, LCK and phosphatidylinositol 3-kinase; upon activation by EFNA1. Interacts with GRB2 (via SH2 domain). Interacts with P53/TP53 and MDM2. Interacts with MYLK. Interacts with BCAR1. Interacts with PDPK1. Interacts (hypophosphorylated) with PXN. Interacts with RB1CC1. Interacts with RHOU. Interacts with VAV1. Interacts with LPXN and PTPN12. In terms of processing, phosphorylated on tyrosine residues in response to various stimuli that elevate the intracellular calcium concentration; this activation is indirect and may be mediated by production of reactive oxygen species (ROS). Tyr-402 is the major autophosphorylation site, but other kinases can also phosphorylate Tyr-402. Autophosphorylation occurs in trans, i.e. one subunit of the dimeric receptor phosphorylates tyrosine residues on the other subunit. Phosphorylation at Tyr-402 promotes interaction with SRC and SRC family members, leading to phosphorylation at Tyr-579; Tyr-580 and Tyr-881. Phosphorylation at Tyr-881 is important for interaction with GRB2. Phosphorylated on tyrosine residues upon activation of FGR and PKC. Recruitment by NPHP1 to cell matrix adhesions initiates Tyr-402 phosphorylation. In monocytes, adherence to substrata is required for tyrosine phosphorylation and kinase activation. Angiotensin II, thapsigargin and L-alpha-lysophosphatidic acid (LPA) also induce autophosphorylation and increase kinase activity. Phosphorylation by MYLK promotes ITGB2 activation and is thus essential to trigger neutrophil transmigration during lung injury. Dephosphorylated by PTPN12. As to expression, most abundant in the brain, with highest levels in amygdala and hippocampus. Low levels in kidney (at protein level). Also expressed in spleen and lymphocytes.

It is found in the cytoplasm. Its subcellular location is the perinuclear region. The protein localises to the cell membrane. The protein resides in the cell junction. It localises to the focal adhesion. It is found in the cell projection. Its subcellular location is the lamellipodium. The protein localises to the cell cortex. The protein resides in the nucleus. It catalyses the reaction L-tyrosyl-[protein] + ATP = O-phospho-L-tyrosyl-[protein] + ADP + H(+). Activated in response to stimuli that lead to increased intracellular Ca(2+) levels; this activation is indirect and may be mediated by calcium-mediated production of reactive oxygen species (ROS). Activated by autophosphorylation at Tyr-402; this creates a binding site for SRC family kinases and leads to phosphorylation at additional tyrosine residues. Phosphorylation at Tyr-402, Tyr-579 and Tyr-580 is required for optimal kinase activity. Inhibited by PF-562,271, BIRB796, PF-4618433 and by PF-431396, PF-2318841 and their derivatives. Inhibited by sulfoximine-substituted trifluoromethylpyrimidines. Inhibited by 4-amino and 5-aryl substituted pyridinone compounds. Non-receptor protein-tyrosine kinase that regulates reorganization of the actin cytoskeleton, cell polarization, cell migration, adhesion, spreading and bone remodeling. Plays a role in the regulation of the humoral immune response, and is required for normal levels of marginal B-cells in the spleen and normal migration of splenic B-cells. Required for normal macrophage polarization and migration towards sites of inflammation. Regulates cytoskeleton rearrangement and cell spreading in T-cells, and contributes to the regulation of T-cell responses. Promotes osteoclastic bone resorption; this requires both PTK2B/PYK2 and SRC. May inhibit differentiation and activity of osteoprogenitor cells. Functions in signaling downstream of integrin and collagen receptors, immune receptors, G-protein coupled receptors (GPCR), cytokine, chemokine and growth factor receptors, and mediates responses to cellular stress. Forms multisubunit signaling complexes with SRC and SRC family members upon activation; this leads to the phosphorylation of additional tyrosine residues, creating binding sites for scaffold proteins, effectors and substrates. Regulates numerous signaling pathways. Promotes activation of phosphatidylinositol 3-kinase and of the AKT1 signaling cascade. Promotes activation of NOS3. Regulates production of the cellular messenger cGMP. Promotes activation of the MAP kinase signaling cascade, including activation of MAPK1/ERK2, MAPK3/ERK1 and MAPK8/JNK1. Promotes activation of Rho family GTPases, such as RHOA and RAC1. Recruits the ubiquitin ligase MDM2 to P53/TP53 in the nucleus, and thereby regulates P53/TP53 activity, P53/TP53 ubiquitination and proteasomal degradation. Acts as a scaffold, binding to both PDPK1 and SRC, thereby allowing SRC to phosphorylate PDPK1 at 'Tyr-9, 'Tyr-373', and 'Tyr-376'. Promotes phosphorylation of NMDA receptors by SRC family members, and thereby contributes to the regulation of NMDA receptor ion channel activity and intracellular Ca(2+) levels. May also regulate potassium ion transport by phosphorylation of potassium channel subunits. Phosphorylates SRC; this increases SRC kinase activity. Phosphorylates ASAP1, NPHP1, KCNA2 and SHC1. Promotes phosphorylation of ASAP2, RHOU and PXN; this requires both SRC and PTK2/PYK2. The protein is Protein-tyrosine kinase 2-beta (PTK2B) of Homo sapiens (Human).